The primary structure comprises 226 residues: Glutathione peroxidase 3 (226 aa).

An N-terminal signal peptide occupies residues 1 to 24; the sequence is MARLFRASCLLSLLLAGFIPPSQG. The active site involves selenocysteine 73. Residue selenocysteine 73 is a non-standard amino acid, selenocysteine.

Belongs to the glutathione peroxidase family. As to quaternary structure, homotetramer. Secreted in plasma.

The protein localises to the secreted. The enzyme catalyses 2 glutathione + H2O2 = glutathione disulfide + 2 H2O. It catalyses the reaction tert-butyl hydroperoxide + 2 glutathione = tert-butanol + glutathione disulfide + H2O. Its function is as follows. Protects cells and enzymes from oxidative damage, by catalyzing the reduction of hydrogen peroxide, lipid peroxides and organic hydroperoxide, by glutathione. The protein is Glutathione peroxidase 3 of Bos taurus (Bovine).